The following is a 1412-amino-acid chain: uncharacterized protein (1412 aa).

Positions 1–22 are disordered; the sequence is MESINVVNSVEDLPGFNPDENV. Coiled-coil stretches lie at residues 317–377 and 732–800; these read NNDF…ILRH and SKEA…SDDE. The interval 778 to 808 is disordered; it reads SRKRKHEDIVKEHEAEKRDSDDEDDFEEVDV. Residues 783 to 797 show a composition bias toward basic and acidic residues; sequence HEDIVKEHEAEKRDS. The segment covering 798 to 808 has biased composition (acidic residues); sequence DDEDDFEEVDV.

This is an uncharacterized protein from Magallana gigas (Pacific oyster).